A 328-amino-acid polypeptide reads, in one-letter code: MKAPVRVAVTGAAGQIGYALLFRIASGEMLGKDQPVILQLLELSNEKAQAALKGVMMELEDCAFPLLAGMVGTDDAEVAFKDIDVALLVGARPRGPGMERKDLLLENAKIFTAQGAALNKVAKRDVKVLVVGNPANTNAYIAMKSAPDLNPKNFTAMLRLDHNRALSQLSLKLGKPVGGIEKLVVWGNHSPTMYPDYRFATSDGASIGDAINDQEWNAGTFIPTVGKRGAAIIEARGLSSAASAANAAIDHVRDWVLGSNGKWVTMGVPSDGSYGIPEGVIFGFPVTTENGQYTLVKDLPIDDFSQKYIDKTLAELEEERSGVSHLLG.

11 to 17 (GAAGQIG) is an NAD(+) binding site. Substrate-binding residues include arginine 94 and arginine 100. Residues asparagine 107, glutamine 114, and 131 to 133 (VGN) contribute to the NAD(+) site. Asparagine 133 and arginine 164 together coordinate substrate. Histidine 189 functions as the Proton acceptor in the catalytic mechanism.

The protein belongs to the LDH/MDH superfamily. MDH type 2 family.

It carries out the reaction (S)-malate + NAD(+) = oxaloacetate + NADH + H(+). Its function is as follows. Catalyzes the reversible oxidation of malate to oxaloacetate. The sequence is that of Malate dehydrogenase from Xanthomonas campestris pv. campestris (strain 8004).